The primary structure comprises 317 residues: Acetyl-coenzyme A carboxylase carboxyl transferase subunit alpha (317 aa).

A CoA carboxyltransferase C-terminal domain is found at 33-294 (NLDDEITRLQ…KKRLLADLAD (262 aa)).

It belongs to the AccA family. Acetyl-CoA carboxylase is a heterohexamer composed of biotin carboxyl carrier protein (AccB), biotin carboxylase (AccC) and two subunits each of ACCase subunit alpha (AccA) and ACCase subunit beta (AccD).

It is found in the cytoplasm. The catalysed reaction is N(6)-carboxybiotinyl-L-lysyl-[protein] + acetyl-CoA = N(6)-biotinyl-L-lysyl-[protein] + malonyl-CoA. It participates in lipid metabolism; malonyl-CoA biosynthesis; malonyl-CoA from acetyl-CoA: step 1/1. In terms of biological role, component of the acetyl coenzyme A carboxylase (ACC) complex. First, biotin carboxylase catalyzes the carboxylation of biotin on its carrier protein (BCCP) and then the CO(2) group is transferred by the carboxyltransferase to acetyl-CoA to form malonyl-CoA. The chain is Acetyl-coenzyme A carboxylase carboxyl transferase subunit alpha from Histophilus somni (strain 2336) (Haemophilus somnus).